We begin with the raw amino-acid sequence, 109 residues long: Large ribosomal subunit protein uL22 (109 aa).

It belongs to the universal ribosomal protein uL22 family. In terms of assembly, part of the 50S ribosomal subunit.

In terms of biological role, this protein binds specifically to 23S rRNA; its binding is stimulated by other ribosomal proteins, e.g. L4, L17, and L20. It is important during the early stages of 50S assembly. It makes multiple contacts with different domains of the 23S rRNA in the assembled 50S subunit and ribosome. Its function is as follows. The globular domain of the protein is located near the polypeptide exit tunnel on the outside of the subunit, while an extended beta-hairpin is found that lines the wall of the exit tunnel in the center of the 70S ribosome. In Wolinella succinogenes (strain ATCC 29543 / DSM 1740 / CCUG 13145 / JCM 31913 / LMG 7466 / NCTC 11488 / FDC 602W) (Vibrio succinogenes), this protein is Large ribosomal subunit protein uL22.